The following is a 77-amino-acid chain: Conotoxin ArMSGL-0143 (77 aa).

Residues 1 to 22 (MSGLGIMLLTLLLLVFMETSHQ) form the signal peptide. Residues 23 to 44 (DAGEKQATQRDAINVRRRRSLT) constitute a propeptide that is removed on maturation. 3 disulfides stabilise this stretch: Cys51-Cys63, Cys55-Cys71, and Cys62-Cys75. Phe76 is modified (phenylalanine amide).

The protein belongs to the conotoxin O3 superfamily. Expressed by the venom duct.

It is found in the secreted. The protein is Conotoxin ArMSGL-0143 of Conus arenatus (Sand-dusted cone).